A 479-amino-acid polypeptide reads, in one-letter code: Glycogen synthase (479 aa).

Lys15 contributes to the ADP-alpha-D-glucose binding site.

This sequence belongs to the glycosyltransferase 1 family. Bacterial/plant glycogen synthase subfamily.

The enzyme catalyses [(1-&gt;4)-alpha-D-glucosyl](n) + ADP-alpha-D-glucose = [(1-&gt;4)-alpha-D-glucosyl](n+1) + ADP + H(+). It participates in glycan biosynthesis; glycogen biosynthesis. In terms of biological role, synthesizes alpha-1,4-glucan chains using ADP-glucose. This chain is Glycogen synthase, found in Pectobacterium atrosepticum (strain SCRI 1043 / ATCC BAA-672) (Erwinia carotovora subsp. atroseptica).